The primary structure comprises 133 residues: Vesicle transport protein GOT1A (133 aa).

Over 1–9 (MISITEWQK) the chain is Cytoplasmic. A helical transmembrane segment spans residues 10-30 (IGVGITGFGVFFILFGILLYF). Residue aspartate 31 is a topological domain, lumenal. Residues 32–52 (SVLLAFGNLLFLTGLSLIIGL) form a helical membrane-spanning segment. The Cytoplasmic portion of the chain corresponds to 53 to 68 (RRTFAFFFQRHKLKGT). A helical membrane pass occupies residues 69 to 89 (SFFLGGVAIVLLRWPLLGMLL). The Lumenal segment spans residues 90–92 (EAY). A helical membrane pass occupies residues 93 to 113 (GFISLFKGFFPVVFGFLGSAF). At 114-133 (NIPFLSTLFQKLQGSSSSMV) the chain is on the cytoplasmic side.

It belongs to the GOT1 family.

The protein resides in the golgi apparatus membrane. May be involved in fusion of ER-derived transport vesicles with the Golgi complex. The polypeptide is Vesicle transport protein GOT1A (Mus musculus (Mouse)).